Consider the following 151-residue polypeptide: 3-dehydroquinate dehydratase (151 aa).

Tyr-24 serves as the catalytic Proton acceptor. Substrate contacts are provided by Asn-76, His-82, and Asp-89. The active-site Proton donor is His-102. Residues 103–104 (LS) and Arg-113 contribute to the substrate site.

Belongs to the type-II 3-dehydroquinase family. Homododecamer.

The enzyme catalyses 3-dehydroquinate = 3-dehydroshikimate + H2O. Its pathway is metabolic intermediate biosynthesis; chorismate biosynthesis; chorismate from D-erythrose 4-phosphate and phosphoenolpyruvate: step 3/7. Catalyzes a trans-dehydration via an enolate intermediate. This chain is 3-dehydroquinate dehydratase, found in Acinetobacter baumannii (strain ATCC 17978 / DSM 105126 / CIP 53.77 / LMG 1025 / NCDC KC755 / 5377).